Consider the following 116-residue polypeptide: Iron-sulfur cluster insertion protein ErpA (116 aa).

3 residues coordinate iron-sulfur cluster: Cys44, Cys108, and Cys110.

It belongs to the HesB/IscA family. As to quaternary structure, homodimer. The cofactor is iron-sulfur cluster.

Required for insertion of 4Fe-4S clusters for at least IspG. The protein is Iron-sulfur cluster insertion protein ErpA of Shewanella oneidensis (strain ATCC 700550 / JCM 31522 / CIP 106686 / LMG 19005 / NCIMB 14063 / MR-1).